A 429-amino-acid polypeptide reads, in one-letter code: Small ribosomal subunit protein uS5m (429 aa).

Residues 108-127 (AGAKKGRGKRTKKKKRKDLN) are disordered. A compositionally biased stretch (basic residues) spans 111-125 (KKGRGKRTKKKKRKD). Positions 218-282 (FDTRILEVRN…NRAVHHLYYI (65 aa)) constitute an S5 DRBM domain.

This sequence belongs to the universal ribosomal protein uS5 family. As to quaternary structure, component of the mitochondrial ribosome small subunit (28S) which comprises a 12S rRNA and about 30 distinct proteins.

The protein localises to the mitochondrion. This chain is Small ribosomal subunit protein uS5m (MRPS5), found in Pongo abelii (Sumatran orangutan).